The primary structure comprises 98 residues: Aspartyl/glutamyl-tRNA(Asn/Gln) amidotransferase subunit C (98 aa).

The tract at residues 76 to 98 (QVLSGAPDAEDGRFKVPAILEED) is disordered.

The protein belongs to the GatC family. As to quaternary structure, heterotrimer of A, B and C subunits.

The catalysed reaction is L-glutamyl-tRNA(Gln) + L-glutamine + ATP + H2O = L-glutaminyl-tRNA(Gln) + L-glutamate + ADP + phosphate + H(+). It catalyses the reaction L-aspartyl-tRNA(Asn) + L-glutamine + ATP + H2O = L-asparaginyl-tRNA(Asn) + L-glutamate + ADP + phosphate + 2 H(+). In terms of biological role, allows the formation of correctly charged Asn-tRNA(Asn) or Gln-tRNA(Gln) through the transamidation of misacylated Asp-tRNA(Asn) or Glu-tRNA(Gln) in organisms which lack either or both of asparaginyl-tRNA or glutaminyl-tRNA synthetases. The reaction takes place in the presence of glutamine and ATP through an activated phospho-Asp-tRNA(Asn) or phospho-Glu-tRNA(Gln). The protein is Aspartyl/glutamyl-tRNA(Asn/Gln) amidotransferase subunit C of Renibacterium salmoninarum (strain ATCC 33209 / DSM 20767 / JCM 11484 / NBRC 15589 / NCIMB 2235).